The primary structure comprises 97 residues: Secreted Ly-6/uPAR domain-containing protein 2 (97 aa).

A signal peptide spans 1 to 22 (MQFHTGLLLAAVLSLQLAAAQA). A UPAR/Ly6 domain is found at 23–95 (LWCHQCTGFG…IACCQTSLCN (73 aa)). 5 cysteine pairs are disulfide-bonded: cysteine 25–cysteine 47, cysteine 28–cysteine 34, cysteine 40–cysteine 68, cysteine 72–cysteine 88, and cysteine 89–cysteine 94.

As to quaternary structure, interacts with CHRNA3, CHRNA4, CHRNA5, CHRNA7, CHRNB2 and CHRNB4. Interacts with CHRM1 and CHRM3 probably in an allosteric manner.

Its subcellular location is the secreted. Functionally, binds and may modulate the functional properties of nicotinic and muscarinic acetylcholine receptors. May regulate keratinocytes proliferation, differentiation and apoptosis. In vitro moderately inhibits ACh-evoked currents of alpha-3:beta-2-containing nAChRs, strongly these of alpha-4:beta-2-containing nAChRs, modulates alpha-7-containing nAChRs, and inhibits nicotine-induced signaling probably implicating alpha-3:beta-4-containing nAChRs. Proposed to act on alpha-3:beta-2 and alpha-7 nAChRs in an orthosteric, and on mAChRs, such as CHRM1 and CHRM3, in an allosteric manner. This is Secreted Ly-6/uPAR domain-containing protein 2 from Macaca mulatta (Rhesus macaque).